We begin with the raw amino-acid sequence, 1160 residues long: GPI inositol-deacylase (1160 aa).

The tract at residues 1–92 (MHRRSSGSPV…DPRSSSAAMP (92 aa)) is disordered. Residues 57 to 92 (GASTPRSRNSSTWRMPSSATTTLLPPDPRSSSAAMP) are compositionally biased toward polar residues. Asn65 carries an N-linked (GlcNAc...) asparagine glycan. Residues 120–140 (PCSILTALTSLLASLFLCAIL) form a helical membrane-spanning segment. Ser307 is an active-site residue. Helical transmembrane passes span 786–806 (LVMR…ALVL) and 832–852 (SSLP…ATSS). N-linked (GlcNAc...) asparagine glycosylation occurs at Asn866. The next 2 membrane-spanning stretches (helical) occupy residues 886–906 (AFFW…CVIL) and 973–993 (ILLL…VACI). N-linked (GlcNAc...) asparagine glycosylation is present at Asn1019. Helical transmembrane passes span 1023–1043 (SIFI…LVWA), 1060–1080 (VLSI…TMIP), 1092–1112 (LILF…AYLL), and 1115–1135 (LANI…GFSV).

It belongs to the GPI inositol-deacylase family.

Its subcellular location is the endoplasmic reticulum membrane. Involved in inositol deacylation of GPI-anchored proteins which plays important roles in the quality control and ER-associated degradation of GPI-anchored proteins. The polypeptide is GPI inositol-deacylase (bst1) (Aspergillus terreus (strain NIH 2624 / FGSC A1156)).